The sequence spans 348 residues: UDP-3-O-acylglucosamine N-acyltransferase (348 aa).

Catalysis depends on His257, which acts as the Proton acceptor.

The protein belongs to the transferase hexapeptide repeat family. LpxD subfamily. As to quaternary structure, homotrimer.

The enzyme catalyses a UDP-3-O-[(3R)-3-hydroxyacyl]-alpha-D-glucosamine + a (3R)-hydroxyacyl-[ACP] = a UDP-2-N,3-O-bis[(3R)-3-hydroxyacyl]-alpha-D-glucosamine + holo-[ACP] + H(+). The protein operates within bacterial outer membrane biogenesis; LPS lipid A biosynthesis. In terms of biological role, catalyzes the N-acylation of UDP-3-O-acylglucosamine using 3-hydroxyacyl-ACP as the acyl donor. Is involved in the biosynthesis of lipid A, a phosphorylated glycolipid that anchors the lipopolysaccharide to the outer membrane of the cell. This chain is UDP-3-O-acylglucosamine N-acyltransferase, found in Bartonella henselae (strain ATCC 49882 / DSM 28221 / CCUG 30454 / Houston 1) (Rochalimaea henselae).